Here is a 357-residue protein sequence, read N- to C-terminus: Protein RecA (357 aa).

69-76 (GPESSGKT) lines the ATP pocket. The tract at residues 337 to 357 (SANSVAKNNEDDEDEDVEEEE) is disordered. Positions 346-357 (EDDEDEDVEEEE) are enriched in acidic residues.

Belongs to the RecA family.

The protein resides in the cytoplasm. In terms of biological role, can catalyze the hydrolysis of ATP in the presence of single-stranded DNA, the ATP-dependent uptake of single-stranded DNA by duplex DNA, and the ATP-dependent hybridization of homologous single-stranded DNAs. It interacts with LexA causing its activation and leading to its autocatalytic cleavage. The protein is Protein RecA of Nostoc sp. (strain PCC 7120 / SAG 25.82 / UTEX 2576).